The chain runs to 394 residues: Protein arginine N-methyltransferase 8 (394 aa).

Glycine 2 carries the N-myristoyl glycine lipid modification. The disordered stretch occupies residues 21–40; that stretch reads VESTEVSSAPPQPPQPVIPA. 2 consecutive short sequence motifs (SH3-binding) follow at residues 29–42 and 53–58; these read APPQ…PAKP and PSCPGR. Positions 30-39 are enriched in pro residues; sequence PPQPPQPVIP. The residue at position 58 (arginine 58) is an Omega-N-methylarginine; by PRMT8. Arginine 73 carries the post-translational modification Asymmetric dimethylarginine; by PRMT8. Residues 73–394 enclose the SAM-dependent MTase PRMT-type domain; it reads RDYYFDSYAH…TSVSNDYKMR (322 aa). Residues histidine 86, arginine 95, glycine 119, 119–122, glutamate 141, and glutamate 170 each bind S-adenosyl-L-methionine; that span reads GSGT. Active-site residues include glutamate 185 and glutamate 194.

The protein belongs to the class I-like SAM-binding methyltransferase superfamily. Protein arginine N-methyltransferase family. PRMT8 subfamily. Homodimer. Tetramer; individual homodimers associates to form a homotetramer. Homooctamer; individual homodimers associates to form a homooctamer and homooligomerization is required for proper localization to the cell membrane. Heterodimer with PRMT1; heterodimerization may recruit PRMT1 activity to the plasma membrane. Interacts with PRMT2 (via the SH3 domain). Interacts with FYN (via the SH3 domain). Interacts with EWS; independently of EWS methylation status. In terms of tissue distribution, brain-specific. Only expressed in neurons, especially in the somatosensory and limbic systems, and a part of motor system. Highly expressed in all of the regions related to general somatosensory system. Expressed in most of the relay nuclei intervening the special somatosensory system, such as the auditory, visual and vestibular systems. Also present in forebrain limbic areas and thalamic nuclei relevant to limbic areas and in areas related to the motor system, such as the caudate putamen, Purkinje cells, inferior olivary nucleus and cerebellar nuclei.

It localises to the cell membrane. It carries out the reaction L-arginyl-[protein] + S-adenosyl-L-methionine = N(omega)-methyl-L-arginyl-[protein] + S-adenosyl-L-homocysteine + H(+). The catalysed reaction is L-arginyl-[protein] + 2 S-adenosyl-L-methionine = N(omega),N(omega)-dimethyl-L-arginyl-[protein] + 2 S-adenosyl-L-homocysteine + 2 H(+). In terms of biological role, S-adenosyl-L-methionine-dependent and membrane-associated arginine methyltransferase that can both catalyze the formation of omega-N monomethylarginine (MMA) and asymmetrical dimethylarginine (aDMA) in proteins such as NIFK, myelin basic protein, histone H4, H2A and H2A/H2B dimer. Able to mono- and dimethylate EWS protein; however its precise role toward EWS remains unclear as it still interacts with fully methylated EWS. The polypeptide is Protein arginine N-methyltransferase 8 (Mus musculus (Mouse)).